Consider the following 464-residue polypeptide: tRNA modification GTPase MnmE (464 aa).

Positions 26, 92, and 131 each coordinate (6S)-5-formyl-5,6,7,8-tetrahydrofolate. The TrmE-type G domain maps to 227–385 (GIKVAILGRV…LISALKDYVS (159 aa)). Asparagine 237 is a K(+) binding site. Residues 237–242 (NAGKSS), 256–262 (SNIAGTT), and 281–284 (DTAG) contribute to the GTP site. Serine 241 is a Mg(2+) binding site. K(+) is bound by residues serine 256, isoleucine 258, and threonine 261. Threonine 262 provides a ligand contact to Mg(2+). Lysine 464 serves as a coordination point for (6S)-5-formyl-5,6,7,8-tetrahydrofolate.

It belongs to the TRAFAC class TrmE-Era-EngA-EngB-Septin-like GTPase superfamily. TrmE GTPase family. As to quaternary structure, homodimer. Heterotetramer of two MnmE and two MnmG subunits. K(+) serves as cofactor.

The protein resides in the cytoplasm. Its function is as follows. Exhibits a very high intrinsic GTPase hydrolysis rate. Involved in the addition of a carboxymethylaminomethyl (cmnm) group at the wobble position (U34) of certain tRNAs, forming tRNA-cmnm(5)s(2)U34. This Brachyspira hyodysenteriae (strain ATCC 49526 / WA1) protein is tRNA modification GTPase MnmE.